The following is a 295-amino-acid chain: Aquaporin-9 (295 aa).

At 1–24 the chain is on the cytoplasmic side; it reads MQPEGAEKGKSFKQRLVLKSSLAK. The chain crosses the membrane as a helical span at residues 25–43; sequence ETLSEFLGTFILIVLGCGC. The Extracellular segment spans residues 44–57; it reads VAQAILSRGRFGGV. Residues 58–77 traverse the membrane as a helical segment; sequence ITINVGFSMAVAMAIYVAGG. At 78-79 the chain is on the cytoplasmic side; it reads VS. An intramembrane region (discontinuously helical) is located at residues 80–92; that stretch reads GGHINPAVSLAMC. Positions 84 to 86 match the NPA 1 motif; that stretch reads NPA. The Cytoplasmic portion of the chain corresponds to 93 to 98; the sequence is LFGRMK. Residues 99–123 form a helical membrane-spanning segment; that stretch reads WFKLPFYVGAQFLGAFVGAATVFGI. Topologically, residues 124–160 are extracellular; the sequence is YYDGLMSFAGGKLLIVGENATAHIFATYPAPYLSLAN. Residues 161-178 traverse the membrane as a helical segment; it reads AFADQVVATMILLIIVFA. Residues 179 to 190 lie on the Cytoplasmic side of the membrane; that stretch reads IFDSRNLGAPRG. A helical membrane pass occupies residues 191–207; the sequence is LEPIAIGLLIIVIASSL. Residues 208 to 210 lie on the Extracellular side of the membrane; the sequence is GLN. The discontinuously helical intramembrane region spans 211–225; it reads SGCAMNPARDLSPRL. The NPA 2 signature appears at 216-218; sequence NPA. Residues 226–243 lie on the Extracellular side of the membrane; that stretch reads FTALAGWGFEVFRAGNNF. A helical membrane pass occupies residues 244–264; sequence WWIPVVGPLVGAVIGGLIYVL. Residues 265-295 are Cytoplasmic-facing; that stretch reads VIEIHHPEPDSVFKTEQSEDKPEKYELSVIM.

The protein belongs to the MIP/aquaporin (TC 1.A.8) family. As to quaternary structure, homotetramer; each monomer provides an independent glycerol/water pore. In terms of tissue distribution, highly expressed in peripheral leukocytes. Also expressed in liver, lung, and spleen.

It is found in the cell membrane. Its subcellular location is the basolateral cell membrane. The enzyme catalyses glycerol(in) = glycerol(out). It carries out the reaction H2O(in) = H2O(out). It catalyses the reaction urea(in) = urea(out). The catalysed reaction is (S)-lactate(in) = (S)-lactate(out). The enzyme catalyses NH4(+)(in) = NH4(+)(out). It carries out the reaction uracil(in) = uracil(out). It catalyses the reaction adenine(out) = adenine(in). The catalysed reaction is 3-hydroxybutanoate(in) = 3-hydroxybutanoate(out). The enzyme catalyses D-sorbitol(in) = D-sorbitol(out). It carries out the reaction D-mannitol(in) = D-mannitol(out). It catalyses the reaction H2O2(out) = H2O2(in). The catalysed reaction is arsenite(in) = arsenite(out). The enzyme catalyses selenite(in) = selenite(out). Its function is as follows. Aquaglyceroporins form homotetrameric transmembrane channels, with each monomer independently mediating glycerol and water transport across the plasma membrane along their osmotic gradient. AQP9 is the primary route for glycerol uptake in hepatocytes, supporting hepatic gluconeogenesis. It exhibits broad specificity and may transport various small, non-charged solutes, including carbamides, polyols, purines, and pyrimidines. AQP9 may also facilitate hepatic urea extrusion. Due to its permeability to lactate, AQP9 might participate in the astrocyte-to-neuron lactate shuttle, supplying neurons with energy. Additionally, AQP9 is permeable to arsenite, contributing to arsenic excretion by the liver and providing partial protection against arsenic toxicity. It is also permeable to H2O2 in vivo. Could also be permeable to ammonium. This is Aquaporin-9 from Homo sapiens (Human).